Here is a 688-residue protein sequence, read N- to C-terminus: UvrABC system protein B (688 aa).

One can recognise a Helicase ATP-binding domain in the interval 41–429; sequence ANFEAGLAKQ…AGEVTELVVR (389 aa). 54–61 is a binding site for ATP; the sequence is GVTGSGKT. Positions 107-130 match the Beta-hairpin motif; it reads YYDYYQPEAYVPSSDTFIEKDSSI. The 167-residue stretch at 446 to 612 folds into the Helicase C-terminal domain; that stretch reads QVDDLMSEIH…SVERPISDIM (167 aa). The segment at 616–646 is disordered; that stretch reads REDAAEKKSGKGRSKSRQVAEETPDYRAMKP. A compositionally biased stretch (basic and acidic residues) spans 633 to 645; it reads QVAEETPDYRAMK. The 36-residue stretch at 650–685 folds into the UVR domain; it reads AGKLKSLEQKMYQHAKDLEFEAAAQIRDQIQKLKTA.

The protein belongs to the UvrB family. In terms of assembly, forms a heterotetramer with UvrA during the search for lesions. Interacts with UvrC in an incision complex.

The protein localises to the cytoplasm. In terms of biological role, the UvrABC repair system catalyzes the recognition and processing of DNA lesions. A damage recognition complex composed of 2 UvrA and 2 UvrB subunits scans DNA for abnormalities. Upon binding of the UvrA(2)B(2) complex to a putative damaged site, the DNA wraps around one UvrB monomer. DNA wrap is dependent on ATP binding by UvrB and probably causes local melting of the DNA helix, facilitating insertion of UvrB beta-hairpin between the DNA strands. Then UvrB probes one DNA strand for the presence of a lesion. If a lesion is found the UvrA subunits dissociate and the UvrB-DNA preincision complex is formed. This complex is subsequently bound by UvrC and the second UvrB is released. If no lesion is found, the DNA wraps around the other UvrB subunit that will check the other stand for damage. The sequence is that of UvrABC system protein B from Xanthomonas oryzae pv. oryzae (strain KACC10331 / KXO85).